The primary structure comprises 628 residues: ATP-dependent zinc metalloprotease FtsH 4 (628 aa).

The Cytoplasmic segment spans residues 1 to 14 (MAIKPQPQWQRRLA). A helical membrane pass occupies residues 15 to 35 (SVLLWGSTIYLLVNLLAPALF). Residues 36–119 (RSQPPQVPYS…AAAPPAKNSW (84 aa)) lie on the Lumenal side of the membrane. Residues 120-140 (FGTLLSWVIPPLIFVGIWSFF) form a helical membrane-spanning segment. Residues 141 to 628 (LNRNNNGAPG…QVQAPGTLVV (488 aa)) are Cytoplasmic-facing. 214–221 (GPPGTGKT) contributes to the ATP binding site. Residue His438 participates in Zn(2+) binding. Glu439 is a catalytic residue. Positions 442 and 515 each coordinate Zn(2+).

The protein in the central section; belongs to the AAA ATPase family. This sequence in the C-terminal section; belongs to the peptidase M41 family. As to quaternary structure, homohexamer. Requires Zn(2+) as cofactor.

Its subcellular location is the cellular thylakoid membrane. Acts as a processive, ATP-dependent zinc metallopeptidase for both cytoplasmic and membrane proteins. Plays a role in the quality control of integral membrane proteins. The sequence is that of ATP-dependent zinc metalloprotease FtsH 4 from Synechocystis sp. (strain ATCC 27184 / PCC 6803 / Kazusa).